The chain runs to 1266 residues: Neuronal-glial cell adhesion molecule (1266 aa).

Residues 1–20 (MALPMVGLLLLLLLGGPGAA) form the signal peptide. At 21 to 1130 (ITIPPEYGAH…PQPGGGVCTK (1110 aa)) the chain is on the extracellular side. Ig-like C2-type domains are found at residues 36–128 (PELT…NVIA), 135–221 (PKEK…KEPL), 236–322 (PRLL…HSVT), 327–413 (PYWV…AFLH), 418–506 (PLRM…ALLE), and 510–597 (PTRI…AQLR). Intrachain disulfides connect cysteine 58-cysteine 110, cysteine 154-cysteine 205, cysteine 260-cysteine 306, and cysteine 348-cysteine 397. Asparagine 97 carries an N-linked (GlcNAc...) asparagine glycan. Asparagine 288, asparagine 390, asparagine 434, asparagine 472, and asparagine 498 each carry an N-linked (GlcNAc...) asparagine glycan. Cysteine 441 and cysteine 490 form a disulfide bridge. A disulfide bond links cysteine 532 and cysteine 581. Fibronectin type-III domains lie at 603 to 698 (PSRD…TPPA), 700 to 804 (PERN…SGED), 809 to 930 (YPEN…TPEG), 934 to 1021 (PPEE…TKPE), and 1022 to 1118 (PPSP…TNGT). The interval 685–710 (EHHAPSAPIETPPAAPERNPGGVHGE) is disordered. N-linked (GlcNAc...) asparagine glycosylation is found at asparagine 712 and asparagine 819. The disordered stretch occupies residues 857-882 (SRRQAPPDPPQIPQSPAEDPPPFPPV). Over residues 862–881 (PPDPPQIPQSPAEDPPPFPP) the composition is skewed to pro residues. Positions 914–916 (RGD) match the Cell attachment site motif. The disordered stretch occupies residues 1004–1025 (STPRERPALQTVGSTKPEPPSP). Residues asparagine 1061, asparagine 1075, asparagine 1100, and asparagine 1116 are each glycosylated (N-linked (GlcNAc...) asparagine). A helical transmembrane segment spans residues 1131-1153 (GWFIGFVSSVVLLLLILLILCFI). Residues 1154 to 1266 (KRSKGGKYSV…ASPCAGPPLD (113 aa)) lie on the Cytoplasmic side of the membrane. Over residues 1163–1195 (VKDKEDTQVDSEARPMKDETFGEYRSLESEAEK) the composition is skewed to basic and acidic residues. A disordered region spans residues 1163 to 1266 (VKDKEDTQVD…ASPCAGPPLD (104 aa)). Residues 1199-1211 (SGSGAGSGVGSPG) show a composition bias toward gly residues.

Belongs to the immunoglobulin superfamily. L1/neurofascin/NgCAM family. As to quaternary structure, binds to itself and to axonin 1. In terms of tissue distribution, brain.

Its subcellular location is the cell membrane. Mediates the adhesion of neurons to neurons and neurons to glia. It is involved in neuronal migration, neurite fasciculation and outgrowth. In Gallus gallus (Chicken), this protein is Neuronal-glial cell adhesion molecule.